The chain runs to 122 residues: Large ribosomal subunit protein uL14 (122 aa).

This sequence belongs to the universal ribosomal protein uL14 family. Part of the 50S ribosomal subunit. Forms a cluster with proteins L3 and L19. In the 70S ribosome, L14 and L19 interact and together make contacts with the 16S rRNA in bridges B5 and B8.

Functionally, binds to 23S rRNA. Forms part of two intersubunit bridges in the 70S ribosome. The protein is Large ribosomal subunit protein uL14 of Natranaerobius thermophilus (strain ATCC BAA-1301 / DSM 18059 / JW/NM-WN-LF).